The primary structure comprises 568 residues: Phosphoprotein (568 aa).

The segment at Met-1–Ser-24 is disordered. Positions Phe-7–Glu-23 are enriched in basic and acidic residues. The segment at Asp-33–Thr-41 is N0 binding. The segment at Glu-45–Ser-324 is disordered. A compositionally biased stretch (basic and acidic residues) spans Glu-58–Leu-105. Residues Asp-107 to Pro-121 are compositionally biased toward polar residues. Composition is skewed to basic and acidic residues over residues Arg-132–Arg-144 and Leu-151–Glu-167. Over residues Arg-190 to Ile-208 the composition is skewed to polar residues. Residues Thr-239–Thr-253 show a composition bias toward basic and acidic residues. Over residues Tyr-294 to Ser-305 the composition is skewed to polar residues. Residues Phe-344–Ser-411 are multimerization. Residues Glu-387–Glu-416 adopt a coiled-coil conformation. The segment at Glu-412 to Thr-445 is l protein binding. A disordered region spans residues Arg-434–Lys-455. Residues Pro-441–Val-450 are compositionally biased toward polar residues. The interval Asp-479–Asn-568 is interaction with the nucleocapsid (N-RNA).

The protein belongs to the respirovirus P protein family. In terms of assembly, homotetramer. Interacts (via multimerization domain) with polymerase L; this interaction forms the polymerase complex. Interacts (via N-terminus) with N0; this interaction allows P to chaperon N0 before encapsidation and form the N-P complex. Interacts (via C-terminus) with N-RNA template; this interaction positions the polymerase on the template.

Functionally, essential cofactor of the RNA polymerase L that plays a central role in the transcription and replication by forming the polymerase complex with RNA polymerase L and recruiting L to the genomic N-RNA template for RNA synthesis. Also plays a central role in the encapsidation of nascent RNA chains by forming the encapsidation complex with the nucleocapsid protein N (N-P complex). Acts as a chaperone for newly synthesized free N protein, so-called N0, allowing encapsidation of nascent RNA chains during replication. The nucleoprotein protein N prevents excessive phosphorylation of P, which leads to down-regulation of viral transcription/ replication. Participates, together with N, in the formation of viral factories (viroplasms), which are large inclusions in the host cytoplasm where replication takes place. Recruits host PI4KB and remodel the host endoplasmic reticulum membrane to form viral replication factories. This is Phosphoprotein (P/C) from Human parainfluenza 1 virus (strain C39) (HPIV-1).